A 365-amino-acid polypeptide reads, in one-letter code: 3-isopropylmalate dehydrogenase (365 aa).

Substrate contacts are provided by R96, R106, R134, and D224. Mg(2+)-binding residues include D224, D248, and D252. Residue 288 to 300 (GSAPTIAKQNIAN) participates in NAD(+) binding.

It belongs to the isocitrate and isopropylmalate dehydrogenases family. LeuB type 1 subfamily. In terms of assembly, homodimer. Mg(2+) serves as cofactor. The cofactor is Mn(2+).

The protein resides in the cytoplasm. It carries out the reaction (2R,3S)-3-isopropylmalate + NAD(+) = 4-methyl-2-oxopentanoate + CO2 + NADH. It functions in the pathway amino-acid biosynthesis; L-leucine biosynthesis; L-leucine from 3-methyl-2-oxobutanoate: step 3/4. Functionally, catalyzes the oxidation of 3-carboxy-2-hydroxy-4-methylpentanoate (3-isopropylmalate) to 3-carboxy-4-methyl-2-oxopentanoate. The product decarboxylates to 4-methyl-2 oxopentanoate. The chain is 3-isopropylmalate dehydrogenase from Dehalococcoides mccartyi (strain CBDB1).